Reading from the N-terminus, the 328-residue chain is LOB domain-containing protein 27 (328 aa).

The LOB domain occupies 35–136; that stretch reads GACAACKYQR…EELKAVNSQL (102 aa).

Belongs to the LOB domain-containing protein family.

This is LOB domain-containing protein 27 (LBD27) from Arabidopsis thaliana (Mouse-ear cress).